We begin with the raw amino-acid sequence, 271 residues long: Pyridoxine kinase (271 aa).

Asn-141 contributes to the ATP binding site. Position 144 (Glu-144) interacts with Mg(2+). Residues 178-182, Asp-190, Ile-206, Gly-215, and Lys-240 each bind ATP; that span reads TGGGK.

It belongs to the ThiD family. Homodimer.

The enzyme catalyses pyridoxal + ATP = pyridoxal 5'-phosphate + ADP + H(+). Functionally, phosphorylates B6 vitamers; functions in a salvage pathway. Uses pyridoxal, pyridoxine, and pyridoxamine as substrates. Can also use hydroxymethylpyrimidine (HMP) as substrate. In Bacillus subtilis (strain 168), this protein is Pyridoxine kinase (pdxK).